The following is a 186-amino-acid chain: Methylamine dehydrogenase light chain (186 aa).

Positions 1–57 form a signal peptide, tat-type signal; sequence MKKNTGFDSGIEKLARKTASKTGRRSFIGKLGGFLVGSALLPLLPVDRRGRMNEAHA. 6 cysteine pairs are disulfide-bonded: Cys-78/Cys-143, Cys-84/Cys-116, Cys-91/Cys-176, Cys-93/Cys-141, Cys-101/Cys-132, and Cys-133/Cys-164. At Trp-112 the chain carries Tryptophylquinone. Residues 112-163 constitute a cross-link (tryptophan tryptophylquinone (Trp-Trp)); sequence WVASCFNPGDGQTYLIAYRDCCGKQTCGRCNCVNVQGELPVYRPEFNNDIVW.

This sequence belongs to the aromatic amine dehydrogenase light chain family. In terms of assembly, heterotetramer of two light and two heavy chains. Tryptophan tryptophylquinone residue is required as a cofactor. In terms of processing, predicted to be exported by the Tat system. The position of the signal peptide cleavage has not been experimentally proven. Tryptophan tryptophylquinone (TTQ) is formed by oxidation of the indole ring of a tryptophan to form tryptophylquinone followed by covalent cross-linking with another tryptophan residue.

The protein localises to the periplasm. It carries out the reaction 2 oxidized [amicyanin] + methylamine + H2O = 2 reduced [amicyanin] + formaldehyde + NH4(+) + 2 H(+). It participates in one-carbon metabolism; methylamine degradation; formaldehyde from methylamine: step 1/1. Its function is as follows. Methylamine dehydrogenase carries out the oxidation of methylamine. Electrons are passed from methylamine dehydrogenase to amicyanin. This is Methylamine dehydrogenase light chain (mauA) from Methylobacillus flagellatus (strain ATCC 51484 / DSM 6875 / VKM B-1610 / KT).